A 282-amino-acid chain; its full sequence is DegV domain-containing protein SPy_0865/M5005_Spy0672 (282 aa).

Positions 3–280 constitute a DegV domain; that stretch reads LAVITDSTAT…EGAIAFGVTP (278 aa). T61 and S94 together coordinate hexadecanoate.

Its function is as follows. May bind long-chain fatty acids, such as palmitate, and may play a role in lipid transport or fatty acid metabolism. The polypeptide is DegV domain-containing protein SPy_0865/M5005_Spy0672 (Streptococcus pyogenes serotype M1).